Here is a 520-residue protein sequence, read N- to C-terminus: RNA-binding protein MEX3A (520 aa).

Residues G49 to S111 are disordered. Residues E60 to A69 show a composition bias toward gly residues. Residues P73–A91 are compositionally biased toward pro residues. 2 consecutive KH domains span residues T132–I193 and Q223–I284. S338 is subject to Phosphoserine. Residues S412–R461 are disordered. Residue S462 is modified to Phosphoserine. The RING-type zinc-finger motif lies at C469–H509.

Post-translationally, phosphorylated. As to expression, highest levels found in fetal brain and testis. Detected also in thymus, salivary gland and uterus.

It is found in the cytoplasm. The protein localises to the nucleus. It localises to the P-body. RNA binding protein, may be involved in post-transcriptional regulatory mechanisms. The sequence is that of RNA-binding protein MEX3A (MEX3A) from Homo sapiens (Human).